The following is a 328-amino-acid chain: Malate dehydrogenase (328 aa).

11-17 (GAAGQIG) provides a ligand contact to NAD(+). 2 residues coordinate substrate: R94 and R100. NAD(+) is bound by residues N107, Q114, and 131-133 (VGN). Positions 133 and 164 each coordinate substrate. The active-site Proton acceptor is H189.

Belongs to the LDH/MDH superfamily. MDH type 2 family.

It catalyses the reaction (S)-malate + NAD(+) = oxaloacetate + NADH + H(+). Its function is as follows. Catalyzes the reversible oxidation of malate to oxaloacetate. This is Malate dehydrogenase from Acinetobacter baumannii (strain SDF).